The following is a 166-amino-acid chain: Probable calcium-binding protein CML17 (166 aa).

EF-hand domains follow at residues 12-47 (EQINELREIFRSFDRNKDGSLTQLELGSLLRALGVK), 48-83 (PSPDQFETLIDKADTKSNGLVEFPEFVALVSPELLS), 91-126 (YTEEQLLRLFRIFDTDGNGFITAAELAHSMAKLGHA), and 127-162 (LTVAELTGMIKEADSDGDGRINFQEFAKAINSAAFD). Positions 25, 27, 29, 31, and 36 each coordinate Ca(2+). 9 residues coordinate Ca(2+): Asp-104, Asp-106, Asn-108, Glu-115, Asp-140, Asp-142, Asp-144, Arg-146, and Glu-151.

In terms of biological role, potential calcium sensor. In Arabidopsis thaliana (Mouse-ear cress), this protein is Probable calcium-binding protein CML17 (CML17).